The sequence spans 344 residues: Tetraacyldisaccharide 4'-kinase (344 aa).

An ATP-binding site is contributed by 68–75 (TAGGNGKT).

Belongs to the LpxK family.

The catalysed reaction is a lipid A disaccharide + ATP = a lipid IVA + ADP + H(+). The protein operates within glycolipid biosynthesis; lipid IV(A) biosynthesis; lipid IV(A) from (3R)-3-hydroxytetradecanoyl-[acyl-carrier-protein] and UDP-N-acetyl-alpha-D-glucosamine: step 6/6. Functionally, transfers the gamma-phosphate of ATP to the 4'-position of a tetraacyldisaccharide 1-phosphate intermediate (termed DS-1-P) to form tetraacyldisaccharide 1,4'-bis-phosphate (lipid IVA). The polypeptide is Tetraacyldisaccharide 4'-kinase (Photobacterium profundum (strain SS9)).